The chain runs to 335 residues: F420-dependent glucose-6-phosphate dehydrogenase 1 (335 aa).

Asp-38 serves as a coordination point for coenzyme F420-(gamma-Glu)n. The active-site Proton donor is the His-39. Residues Thr-75 and 106 to 107 each bind coenzyme F420-(gamma-Glu)n; that span reads TG. The Proton acceptor role is filled by Glu-108. Residues Asn-111, 176-177, and 179-180 contribute to the coenzyme F420-(gamma-Glu)n site; these read GG and VV. Residues Thr-194, Lys-197, Lys-258, and Arg-282 each contribute to the substrate site.

It belongs to the F420-dependent glucose-6-phosphate dehydrogenase family. Homodimer.

The enzyme catalyses oxidized coenzyme F420-(gamma-L-Glu)(n) + D-glucose 6-phosphate + H(+) = 6-phospho-D-glucono-1,5-lactone + reduced coenzyme F420-(gamma-L-Glu)(n). Catalyzes the coenzyme F420-dependent oxidation of glucose 6-phosphate (G6P) to 6-phosphogluconolactone. This chain is F420-dependent glucose-6-phosphate dehydrogenase 1, found in Rhodococcus jostii (strain RHA1).